A 308-amino-acid chain; its full sequence is Probable acetylxylan esterase A (308 aa).

The first 19 residues, 1-19 (MAPFSFLLTLLLYTLSAGA), serve as a signal peptide directing secretion. Residue Asn141 is glycosylated (N-linked (GlcNAc...) asparagine). Catalysis depends on Ser151, which acts as the Charge relay system. The N-linked (GlcNAc...) asparagine glycan is linked to Asn193.

The protein belongs to the carbohydrate esterase 1 (CE1) family. AxeA subfamily. As to quaternary structure, monomer.

It localises to the secreted. The enzyme catalyses Deacetylation of xylans and xylo-oligosaccharides.. It functions in the pathway glycan degradation; xylan degradation. In terms of biological role, acetylxylan esterase involved in the hydrolysis of xylan, a major structural heterogeneous polysaccharide found in plant biomass representing the second most abundant polysaccharide in the biosphere, after cellulose. Degrades acetylated xylans by cleaving acetyl side groups from the hetero-xylan backbone. The protein is Probable acetylxylan esterase A (axeA) of Aspergillus clavatus (strain ATCC 1007 / CBS 513.65 / DSM 816 / NCTC 3887 / NRRL 1 / QM 1276 / 107).